A 513-amino-acid polypeptide reads, in one-letter code: Maturase K (513 aa).

Belongs to the intron maturase 2 family. MatK subfamily.

Its subcellular location is the plastid. It localises to the chloroplast. Usually encoded in the trnK tRNA gene intron. Probably assists in splicing its own and other chloroplast group II introns. The protein is Maturase K of Danthonia spicata (Poverty oatgrass).